We begin with the raw amino-acid sequence, 198 residues long: MSKVLVLKSSILGGYSQSALLVDHLIGKWEDQGATITVRDLAGKDVLPMVDGEIASGLRGGAELTARQQEMLDLSNALVEELKANDTIVITAPMYNFNIPTQLKNWIDFVARAGVTFTYTENGPKGLVEGKRAVLITTRGGAHKDGPTDHIVPFLKTFLGFIGITDVEVVYGEALNMGPEANQKGISEAKQSLDALTV.

FMN contacts are provided by residues Ser10, 16–18, 94–97, and 138–141; these read SQS, MYNF, and TRGG.

The protein belongs to the azoreductase type 1 family. In terms of assembly, homodimer. Requires FMN as cofactor.

The enzyme catalyses 2 a quinone + NADH + H(+) = 2 a 1,4-benzosemiquinone + NAD(+). It catalyses the reaction N,N-dimethyl-1,4-phenylenediamine + anthranilate + 2 NAD(+) = 2-(4-dimethylaminophenyl)diazenylbenzoate + 2 NADH + 2 H(+). Its function is as follows. Quinone reductase that provides resistance to thiol-specific stress caused by electrophilic quinones. In terms of biological role, also exhibits azoreductase activity. Catalyzes the reductive cleavage of the azo bond in aromatic azo compounds to the corresponding amines. In Shewanella sp. (strain ANA-3), this protein is FMN-dependent NADH:quinone oxidoreductase.